The following is a 468-amino-acid chain: Tapasin-related protein (468 aa).

Residues 1–18 form the signal peptide; the sequence is MGTQEGWCLLLCLALSGA. Residues 19-405 lie on the Lumenal side of the membrane; the sequence is AETKPHPAEG…STQVVPPERR (387 aa). The Ig-like V-type domain occupies 181–297; it reads PQGTVRTAVE…SLYRAQQIIQ (117 aa). Disulfide bonds link cysteine 212–cysteine 283 and cysteine 321–cysteine 382. The 91-residue stretch at 304 to 394 folds into the Ig-like C1-type domain; it reads PKVRLSLANE…THISLEEPLG (91 aa). A helical membrane pass occupies residues 406 to 426; the sequence is TALGVIFASSLFLLALMFLGL. Residues 427 to 468 are Cytoplasmic-facing; that stretch reads QRRQAPTGLGLLQAERWETTSCADTQSSHLHEDRTARVSQPS. Residues 449–468 form a disordered region; it reads ADTQSSHLHEDRTARVSQPS.

Interacts with peptide-free HLA-A*02-B2M complexes or those loaded with low affinity peptides, likely facilitating peptide exchange onto higher affinity peptides. Interacts with MR1 in a ligand-independent way; this interaction may stabilize MR1 pool and facilitate ligand loading and dissociation.

The protein resides in the cell membrane. It is found in the endoplasmic reticulum membrane. Its subcellular location is the microsome membrane. The protein localises to the golgi apparatus membrane. Functionally, component of the antigen processing and presentation pathway, which binds to MHC class I coupled with beta2-microglobulin/B2M. Association between TAPBPR and MHC class I occurs in the absence of a functional peptide-loading complex (PLC). In Homo sapiens (Human), this protein is Tapasin-related protein (TAPBPL).